Here is an 87-residue protein sequence, read N- to C-terminus: Mitochondrial import inner membrane translocase subunit TIM9 (87 aa).

The residue at position 1 (M1) is an N-acetylmethionine. The Twin CX3C motif motif lies at 35–59; that stretch reads CFTDCVNDFTTSKLTNKEQTCIMKC. 2 disulfide bridges follow: C35–C59 and C39–C55.

The protein belongs to the small Tim family. As to quaternary structure, heterohexamer; composed of 3 copies of TIM9 and 3 copies of TIM10, named soluble 70 kDa complex. Associates with the TIM12 component of the TIM22 complex, whose core is composed of TIM18, TIM22 and TIM54. Interacts with the transmembrane regions of multi-pass transmembrane proteins in transit.

It is found in the mitochondrion inner membrane. The protein localises to the mitochondrion intermembrane space. Mitochondrial intermembrane chaperone that participates in the import and insertion of multi-pass transmembrane proteins into the mitochondrial inner membrane. Also required for the transfer of beta-barrel precursors from the TOM complex to the sorting and assembly machinery (SAM complex) of the outer membrane. Acts as a chaperone-like protein that protects the hydrophobic precursors from aggregation and guide them through the mitochondrial intermembrane space. Compared to TIM10, it may have a strong structural role. The protein is Mitochondrial import inner membrane translocase subunit TIM9 (TIM9) of Saccharomyces cerevisiae (strain ATCC 204508 / S288c) (Baker's yeast).